We begin with the raw amino-acid sequence, 1127 residues long: Carbamoyl phosphate synthase large chain (1127 aa).

The segment at 1–402 (MPKRTDIKSV…SLGKAMRSID (402 aa)) is carboxyphosphate synthetic domain. 12 residues coordinate ATP: Arg-129, Arg-169, Gly-175, Gly-176, Glu-208, Ile-210, Glu-215, Gly-241, Val-242, His-243, Gln-285, and Glu-299. The 196-residue stretch at 133–328 (KKVVDEAGAE…IAKIATKLAL (196 aa)) folds into the ATP-grasp 1 domain. Residues Gln-285, Glu-299, and Asn-301 each contribute to the Mg(2+) site. Mn(2+) is bound by residues Gln-285, Glu-299, and Asn-301. Residues 403–551 (KRHMGFNWDG…YYYSCYADET (149 aa)) form an oligomerization domain region. Residues 552–962 (ELRPREREAV…AFAKSQLAAY (411 aa)) form a carbamoyl phosphate synthetic domain region. Positions 681–881 (GEVLKKAEMN…LAKAAARIMA (201 aa)) constitute an ATP-grasp 2 domain. The ATP site is built by Arg-717, Lys-765, Leu-767, Glu-772, Gly-797, Val-798, His-799, Ser-800, Gln-840, and Glu-852. Mg(2+) is bound by residues Gln-840, Glu-852, and Asn-854. Mn(2+)-binding residues include Gln-840, Glu-852, and Asn-854. Positions 963-1127 (DGGLPTHGNV…QLFELERREF (165 aa)) are allosteric domain. In terms of domain architecture, MGS-like spans 964–1127 (GGLPTHGNVF…QLFELERREF (164 aa)).

This sequence belongs to the CarB family. Composed of two chains; the small (or glutamine) chain promotes the hydrolysis of glutamine to ammonia, which is used by the large (or ammonia) chain to synthesize carbamoyl phosphate. Tetramer of heterodimers (alpha,beta)4. The cofactor is Mg(2+). It depends on Mn(2+) as a cofactor.

It catalyses the reaction hydrogencarbonate + L-glutamine + 2 ATP + H2O = carbamoyl phosphate + L-glutamate + 2 ADP + phosphate + 2 H(+). The catalysed reaction is hydrogencarbonate + NH4(+) + 2 ATP = carbamoyl phosphate + 2 ADP + phosphate + 2 H(+). It functions in the pathway amino-acid biosynthesis; L-arginine biosynthesis; carbamoyl phosphate from bicarbonate: step 1/1. Its pathway is pyrimidine metabolism; UMP biosynthesis via de novo pathway; (S)-dihydroorotate from bicarbonate: step 1/3. In terms of biological role, large subunit of the glutamine-dependent carbamoyl phosphate synthetase (CPSase). CPSase catalyzes the formation of carbamoyl phosphate from the ammonia moiety of glutamine, carbonate, and phosphate donated by ATP, constituting the first step of 2 biosynthetic pathways, one leading to arginine and/or urea and the other to pyrimidine nucleotides. The large subunit (synthetase) binds the substrates ammonia (free or transferred from glutamine from the small subunit), hydrogencarbonate and ATP and carries out an ATP-coupled ligase reaction, activating hydrogencarbonate by forming carboxy phosphate which reacts with ammonia to form carbamoyl phosphate. The sequence is that of Carbamoyl phosphate synthase large chain from Bifidobacterium longum (strain DJO10A).